Consider the following 259-residue polypeptide: Probable kinetochore protein spc25 (259 aa).

Over residues 1-20 (MSRKSVMSSTFEPSLSTSRQ) the composition is skewed to polar residues. A disordered region spans residues 1-25 (MSRKSVMSSTFEPSLSTSRQPLGPS). The stretch at 59–162 (RKRVLEERNQ…HAAQLEAQAR (104 aa)) forms a coiled coil.

The protein belongs to the SPC25 family. Component of the NDC80 complex, which consists of kpr-1/ndc80, kpr-2/nuf2, kpr-3/spc24 and kpr-4/spc25.

The protein resides in the nucleus. The protein localises to the chromosome. It is found in the centromere. It localises to the kinetochore. Acts as a component of the essential kinetochore-associated NDC80 complex, which is required for chromosome segregation and spindle checkpoint activity. In Neurospora crassa (strain ATCC 24698 / 74-OR23-1A / CBS 708.71 / DSM 1257 / FGSC 987), this protein is Probable kinetochore protein spc25 (kpr-4).